A 500-amino-acid chain; its full sequence is Putative beta-glucosidase 5 (500 aa).

Positions 1–20 (MEQFFALFTIFLSFAFPGRC) are cleaved as a signal peptide. Residues Q43, H140, and 185–186 (NE) each bind a beta-D-glucoside. The active-site Proton donor is E186. A disulfide bridge links C205 with C212. N216 is a glycosylation site (N-linked (GlcNAc...) asparagine). Y328 contributes to the a beta-D-glucoside binding site. Residue N361 is glycosylated (N-linked (GlcNAc...) asparagine). A beta-D-glucoside is bound at residue E394. The active-site Nucleophile is the E394. An N-linked (GlcNAc...) asparagine glycan is attached at N424. The a beta-D-glucoside site is built by W434 and Y450. N-linked (GlcNAc...) asparagine glycosylation is found at N456 and N495.

This sequence belongs to the glycosyl hydrolase 1 family.

The catalysed reaction is Hydrolysis of terminal, non-reducing beta-D-glucosyl residues with release of beta-D-glucose.. This is Putative beta-glucosidase 5 from Arabidopsis thaliana (Mouse-ear cress).